The following is a 378-amino-acid chain: TelA-like protein SAS1347 (378 aa).

Belongs to the TelA family.

The polypeptide is TelA-like protein SAS1347 (Staphylococcus aureus (strain MSSA476)).